A 137-amino-acid polypeptide reads, in one-letter code: Partner of bursicon (137 aa).

Residues 1–24 (MNIMITKIFFLVQLFYIVVSKSSA) form the signal peptide. Cystine bridges form between Cys-28-Cys-86, Cys-52-Cys-101, Cys-61-Cys-127, Cys-65-Cys-129, and Cys-83-Cys-132. The region spanning 28–123 (CETVASEVHV…NALMEVRLRE (96 aa)) is the CTCK domain.

Heterodimer of burs and pburs.

The protein resides in the secreted. Functionally, final heterodimeric neurohormone released at the end of the molting cycle, involved in the sclerotization (tanning) of the insect cuticle, melanization and wing spreading. The chain is Partner of bursicon from Bombyx mori (Silk moth).